The following is a 405-amino-acid chain: ATP phosphoribosyltransferase regulatory subunit (405 aa).

This sequence belongs to the class-II aminoacyl-tRNA synthetase family. HisZ subfamily. As to quaternary structure, heteromultimer composed of HisG and HisZ subunits.

Its subcellular location is the cytoplasm. It functions in the pathway amino-acid biosynthesis; L-histidine biosynthesis; L-histidine from 5-phospho-alpha-D-ribose 1-diphosphate: step 1/9. Its function is as follows. Required for the first step of histidine biosynthesis. May allow the feedback regulation of ATP phosphoribosyltransferase activity by histidine. This chain is ATP phosphoribosyltransferase regulatory subunit, found in Microcystis aeruginosa (strain NIES-843 / IAM M-2473).